We begin with the raw amino-acid sequence, 140 residues long: Small ribosomal subunit protein bS6 (140 aa).

The disordered stretch occupies residues 96 to 140 (VTGQSEMLKAEENRSERRERRERPENAESNDGDDSDSNDSDNADE). The segment covering 103-121 (LKAEENRSERRERRERPEN) has biased composition (basic and acidic residues). Residues 123–140 (ESNDGDDSDSNDSDNADE) are compositionally biased toward acidic residues.

The protein belongs to the bacterial ribosomal protein bS6 family.

In terms of biological role, binds together with bS18 to 16S ribosomal RNA. The protein is Small ribosomal subunit protein bS6 of Ectopseudomonas mendocina (strain ymp) (Pseudomonas mendocina).